The primary structure comprises 247 residues: Eukaryotic translation initiation factor 6 (247 aa).

A phosphoserine; by CK1 mark is found at Ser174 and Ser175.

The protein belongs to the eIF-6 family. Monomer. Associates with the 60S ribosomal subunit. Phosphorylation at Ser-174 and Ser-175 promotes nuclear export.

Its subcellular location is the cytoplasm. It is found in the nucleus. The protein resides in the nucleolus. Its function is as follows. Binds to the 60S ribosomal subunit and prevents its association with the 40S ribosomal subunit to form the 80S initiation complex in the cytoplasm. Is also involved in ribosome biogenesis. Associates with pre-60S subunits in the nucleus and is involved in its nuclear export. This Talaromyces stipitatus (strain ATCC 10500 / CBS 375.48 / QM 6759 / NRRL 1006) (Penicillium stipitatum) protein is Eukaryotic translation initiation factor 6 (tif6).